The sequence spans 363 residues: 3-isopropylmalate dehydrogenase (363 aa).

Gly-78–Glu-91 lines the NAD(+) pocket. Positions 99, 109, 138, and 227 each coordinate substrate. Asp-227, Asp-251, and Asp-255 together coordinate Mg(2+). Gly-285–Asn-297 serves as a coordination point for NAD(+).

It belongs to the isocitrate and isopropylmalate dehydrogenases family. LeuB type 1 subfamily. As to quaternary structure, homodimer. Mg(2+) serves as cofactor. Mn(2+) is required as a cofactor.

The protein localises to the cytoplasm. It carries out the reaction (2R,3S)-3-isopropylmalate + NAD(+) = 4-methyl-2-oxopentanoate + CO2 + NADH. Its pathway is amino-acid biosynthesis; L-leucine biosynthesis; L-leucine from 3-methyl-2-oxobutanoate: step 3/4. Functionally, catalyzes the oxidation of 3-carboxy-2-hydroxy-4-methylpentanoate (3-isopropylmalate) to 3-carboxy-4-methyl-2-oxopentanoate. The product decarboxylates to 4-methyl-2 oxopentanoate. The chain is 3-isopropylmalate dehydrogenase from Buchnera aphidicola subsp. Diuraphis noxia.